A 131-amino-acid chain; its full sequence is UPF0344 protein Sca_0577 (131 aa).

The next 4 helical transmembrane spans lie at M1–I21, L42–A62, L69–V89, and G99–P119.

The protein belongs to the UPF0344 family.

The protein resides in the cell membrane. The chain is UPF0344 protein Sca_0577 from Staphylococcus carnosus (strain TM300).